The primary structure comprises 107 residues: MLLATSGRLDGFKVTKYLGIVTGEAIMGTNFIRDLLASISDIIGGRSGAYEQQLEEARNIVLNEMSERAKRLGANAVIGISLDYESVGQSMLMVVATGTAVYIEPEM.

Belongs to the UPF0145 family.

The polypeptide is UPF0145 protein CHY_0465 (Carboxydothermus hydrogenoformans (strain ATCC BAA-161 / DSM 6008 / Z-2901)).